Here is a 553-residue protein sequence, read N- to C-terminus: Protein PALS2 (553 aa).

L27 domains lie at 1–48 (MQQV…EDSK) and 49–107 (LEAV…YDSP). In terms of domain architecture, PDZ spans 129–208 (ILGIHKKAGE…SVTLKILPSY (80 aa)). Positions 228 to 297 (VRQVFVKCHF…PSQFLEEKRK (70 aa)) constitute an SH3 domain. The Guanylate kinase-like domain occupies 351–538 (RKTLVLIGAQ…AFEKLQTAIE (188 aa)). At Tyr513 the chain carries Phosphotyrosine.

Belongs to the MAGUK family. As to quaternary structure, interacts with CADM1. Interacts with the LIN7 proteins.

The protein localises to the membrane. This chain is Protein PALS2, found in Mus musculus (Mouse).